Here is a 444-residue protein sequence, read N- to C-terminus: CCA-adding enzyme (444 aa).

ATP is bound by residues S57 and R60. The CTP site is built by S57 and R60. 3 residues coordinate Mg(2+): D69, D71, and D124. Residues H147, K168, and Y177 each contribute to the ATP site. CTP is bound by residues H147, K168, and Y177.

This sequence belongs to the tRNA nucleotidyltransferase/poly(A) polymerase family. Archaeal CCA-adding enzyme subfamily. In terms of assembly, homodimer. Mg(2+) serves as cofactor.

The enzyme catalyses a tRNA precursor + 2 CTP + ATP = a tRNA with a 3' CCA end + 3 diphosphate. The catalysed reaction is a tRNA with a 3' CCA end + 2 CTP + ATP = a tRNA with a 3' CCACCA end + 3 diphosphate. Functionally, catalyzes the addition and repair of the essential 3'-terminal CCA sequence in tRNAs without using a nucleic acid template. Adds these three nucleotides in the order of C, C, and A to the tRNA nucleotide-73, using CTP and ATP as substrates and producing inorganic pyrophosphate. tRNA 3'-terminal CCA addition is required both for tRNA processing and repair. Also involved in tRNA surveillance by mediating tandem CCA addition to generate a CCACCA at the 3' terminus of unstable tRNAs. While stable tRNAs receive only 3'-terminal CCA, unstable tRNAs are marked with CCACCA and rapidly degraded. This Methanococcus maripaludis (strain C5 / ATCC BAA-1333) protein is CCA-adding enzyme.